The following is an 860-amino-acid chain: Leucine--tRNA ligase (860 aa).

The 'HIGH' region signature appears at 42–52 (PYPSGRLHMGH). The 'KMSKS' region signature appears at 619-623 (KMSKS). K622 is an ATP binding site.

Belongs to the class-I aminoacyl-tRNA synthetase family.

It localises to the cytoplasm. It catalyses the reaction tRNA(Leu) + L-leucine + ATP = L-leucyl-tRNA(Leu) + AMP + diphosphate. The sequence is that of Leucine--tRNA ligase from Salmonella typhimurium (strain LT2 / SGSC1412 / ATCC 700720).